Reading from the N-terminus, the 152-residue chain is Putative polyketide cyclase (152 aa).

The protein to polyketide cyclases.

The protein operates within antibiotic biosynthesis; curamycin biosynthesis. This Streptomyces cyaneus (Streptomyces curacoi) protein is Putative polyketide cyclase (curF).